We begin with the raw amino-acid sequence, 344 residues long: MSNTLFSLAFGVGSQNRQGAWLEVFYAQPLLNPSAELVAAVAPVLGYEGGNQAIAFSNAQAAQLAEALKGVDAAQAALLTRLAESHKPLVATLLAEDAALSSTPEAYLKLHLLSHRLVKPHGVSLAGIFPLLPNVAWTNQGAVDLGELAELQLEARLKGELLEVFSVDKFPKMTDYVVPAGVRIADTARVRLGAYIGEGTTIMHEGFVNFNAGTEGPGMIEGRVSAGVFVGKGSDLGGGCSTMGTLSGGGNIVIKVGEGCLIGANAGIGIPLGDRNTVEAGLYITAGTKVNLLDENNELVKVVKARDLAGQTDLLFRRNSLNGAVECKTHKSAIELNEALHAHN.

Glu-205 lines the Mg(2+) pocket. Glu-221 functions as the Acyl-anhydride intermediate in the catalytic mechanism. Residues Arg-223, Gly-238, Ser-241, Ala-264, 279–280, Gly-287, Lys-304, and 317–320 contribute to the succinyl-CoA site; these read EA and RRNS.

The protein belongs to the type 2 tetrahydrodipicolinate N-succinyltransferase family. In terms of assembly, homotrimer.

Its subcellular location is the cytoplasm. It carries out the reaction (S)-2,3,4,5-tetrahydrodipicolinate + succinyl-CoA + H2O = (S)-2-succinylamino-6-oxoheptanedioate + CoA. It functions in the pathway amino-acid biosynthesis; L-lysine biosynthesis via DAP pathway; LL-2,6-diaminopimelate from (S)-tetrahydrodipicolinate (succinylase route): step 1/3. Its function is as follows. Catalyzes the conversion of the cyclic tetrahydrodipicolinate (THDP) into the acyclic N-succinyl-L-2-amino-6-oxopimelate using succinyl-CoA. The protein is 2,3,4,5-tetrahydropyridine-2,6-dicarboxylate N-succinyltransferase of Pseudomonas putida (strain ATCC 47054 / DSM 6125 / CFBP 8728 / NCIMB 11950 / KT2440).